A 175-amino-acid chain; its full sequence is Large ribosomal subunit protein uL10 (175 aa).

Belongs to the universal ribosomal protein uL10 family. In terms of assembly, part of the ribosomal stalk of the 50S ribosomal subunit. The N-terminus interacts with L11 and the large rRNA to form the base of the stalk. The C-terminus forms an elongated spine to which L12 dimers bind in a sequential fashion forming a multimeric L10(L12)X complex.

Its function is as follows. Forms part of the ribosomal stalk, playing a central role in the interaction of the ribosome with GTP-bound translation factors. This chain is Large ribosomal subunit protein uL10, found in Synechococcus sp. (strain CC9311).